We begin with the raw amino-acid sequence, 354 residues long: Rhodopsin (354 aa).

Residues 1–36 are Extracellular-facing; that stretch reads MNGTEGENFYVPMSNKTGVVRSPFDYPQYYLGEPWM. N2 and N15 each carry an N-linked (GlcNAc...) asparagine glycan. A helical membrane pass occupies residues 37 to 61; the sequence is FSALAAYMFFLILTGLPVNFLTLFV. Topologically, residues 62–73 are cytoplasmic; the sequence is TIQHKKLRQPLN. The chain crosses the membrane as a helical span at residues 74 to 96; it reads YILLNLAVSDLFMVFGGFTTTII. At 97 to 110 the chain is on the extracellular side; that stretch reads TSMNGYFIFGPAGC. A disulfide bond links C110 and C187. Residues 111–133 traverse the membrane as a helical segment; it reads NFEGFFATLGGEVGLWCLVVLAI. A 'Ionic lock' involved in activated form stabilization motif is present at residues 134–136; that stretch reads ERY. At 134-152 the chain is on the cytoplasmic side; it reads ERYMVVCKPMANFRFGSQH. The chain crosses the membrane as a helical span at residues 153–173; the sequence is AIIGVVFTWIMALSCAGPPLV. Topologically, residues 174 to 202 are extracellular; sequence GWSRYIPEGLQCSCGVDYYTMKPEVNNES. The chain crosses the membrane as a helical span at residues 203-224; sequence FVIYMFVVHFTIPLIVIFFCYG. Over 225–252 the chain is Cytoplasmic; sequence RLVCTVKEAAAQQQESESTQRAEREVTR. Residues 253-274 form a helical membrane-spanning segment; it reads MVIIMVVAFLICWVPYASVAFY. Residues 275–286 lie on the Extracellular side of the membrane; it reads IFINQGCDFTPF. Residues 287–308 form a helical membrane-spanning segment; it reads FMTVPAFFAKSSAVYNPLIYIL. K296 carries the post-translational modification N6-(retinylidene)lysine. The Cytoplasmic portion of the chain corresponds to 309–354; sequence MNKQFRNCMITTICLGKNPFEEEESTSASASKTEASSVSSSQVAPA. C322 carries S-palmitoyl cysteine lipidation. Residues 333–354 form a disordered region; the sequence is STSASASKTEASSVSSSQVAPA. The span at 334 to 354 shows a compositional bias: low complexity; the sequence is TSASASKTEASSVSSSQVAPA.

The protein belongs to the G-protein coupled receptor 1 family. Opsin subfamily. Phosphorylated on some or all of the serine and threonine residues present in the C-terminal region. Post-translationally, contains one covalently linked retinal chromophore.

It is found in the membrane. Its subcellular location is the cell projection. It localises to the cilium. The protein localises to the photoreceptor outer segment. In terms of biological role, photoreceptor required for image-forming vision at low light intensity. While most salt water fish species use retinal as chromophore, most freshwater fish use 3-dehydroretinal, or a mixture of retinal and 3-dehydroretinal. Light-induced isomerization of 11-cis to all-trans retinal triggers a conformational change that activates signaling via G-proteins. Subsequent receptor phosphorylation mediates displacement of the bound G-protein alpha subunit by arrestin and terminates signaling. This Leucoraja erinaceus (Little skate) protein is Rhodopsin (rho).